A 198-amino-acid polypeptide reads, in one-letter code: SCO2-like protein RF_0043 (198 aa).

The protein belongs to the SCO1/2 family.

The chain is SCO2-like protein RF_0043 from Rickettsia felis (strain ATCC VR-1525 / URRWXCal2) (Rickettsia azadi).